A 286-amino-acid polypeptide reads, in one-letter code: Oxidoreductase clz15 (286 aa).

This sequence belongs to the asaB hydroxylase/desaturase family.

The protein operates within secondary metabolite biosynthesis. In terms of biological role, oxidoreductase; part of the gene cluster that mediates the biosynthesis of squalestatin S1 (SQS1, also known as zaragozic acid A), a heavily oxidized fungal polyketide that offers potent cholesterol lowering activity by targeting squalene synthase (SS). SQS1 is composed of a 2,8-dioxobicyclic[3.2.1]octane-3,4,5-tricarboxyclic acid core that is connected to two lipophilic polyketide arms. These initial steps feature the priming of an unusual benzoic acid starter unit onto the highly reducing polyketide synthase clz14, followed by oxaloacetate extension and product release to generate a tricarboxylic acid containing product. The phenylalanine ammonia lyase (PAL) clz10 and the acyl-CoA ligase clz12 are involved in transforming phenylalanine into benzoyl-CoA. The citrate synthase-like protein clz17 is involved in connecting the C-alpha-carbons of the hexaketide chain and oxaloacetate to afford the tricarboxylic acid unit. The potential hydrolytic enzymes, clz11 and clz13, are in close proximity to pks2 and may participate in product release. On the other side, the tetraketide arm is synthesized by a the squalestatin tetraketide synthase clz2 and enzymatically esterified to the core in the last biosynthetic step, by the acetyltransferase clz6. The biosynthesis of the tetraketide must involve 3 rounds of chain extension. After the first and second rounds methyl-transfer occurs, and in all rounds of extension the ketoreductase and dehydratase are active. The enoyl reductase and C-MeT of clz2 are not active in the final round of extension. The acetyltransferase clz6 appears to have a broad substrate selectivity for its acyl CoA substrate, allowing the in vitro synthesis of novel squalestatins. The biosynthesis of SQS1 requires several oxidative steps likely performed by oxidoreductases clz3, clz15 and clz16. Finally, in support of the identification of the cluster as being responsible for SQS1 production, the cluster contains a gene encoding a putative squalene synthase (SS) clz20, suggesting a likely mechanism for self-resistance. This is Oxidoreductase clz15 from Cochliobolus lunatus (Filamentous fungus).